The following is a 588-amino-acid chain: Peptidoglycan D,D-transpeptidase FtsI (588 aa).

The chain crosses the membrane as a helical span at residues 19-39 (FISWRFALLCGCILLALAFLL). The active-site Acyl-ester intermediate is the Ser-307. The propeptide occupies 578-588 (INQGEGTGGRS).

Belongs to the transpeptidase family. FtsI subfamily.

It localises to the cell inner membrane. It catalyses the reaction Preferential cleavage: (Ac)2-L-Lys-D-Ala-|-D-Ala. Also transpeptidation of peptidyl-alanyl moieties that are N-acyl substituents of D-alanine.. Its pathway is cell wall biogenesis; peptidoglycan biosynthesis. Catalyzes cross-linking of the peptidoglycan cell wall at the division septum. This Escherichia coli O157:H7 protein is Peptidoglycan D,D-transpeptidase FtsI.